Reading from the N-terminus, the 183-residue chain is TATA-box-binding protein (183 aa).

Tandem repeats lie at residues 8-84 (VENI…VDKI) and 99-175 (IQNI…KERL).

Belongs to the TBP family.

In terms of biological role, general factor that plays a role in the activation of archaeal genes transcribed by RNA polymerase. Binds specifically to the TATA box promoter element which lies close to the position of transcription initiation. This is TATA-box-binding protein from Methanosphaera stadtmanae (strain ATCC 43021 / DSM 3091 / JCM 11832 / MCB-3).